Here is a 294-residue protein sequence, read N- to C-terminus: N-acetylmuramic acid 6-phosphate etherase (294 aa).

The SIS domain occupies 54 to 217 (VIQSFEEEGR…STASMIGVGK (164 aa)). Residue Glu82 is the Proton donor of the active site. Residue Glu113 is part of the active site.

Belongs to the GCKR-like family. MurNAc-6-P etherase subfamily. Homodimer.

The catalysed reaction is N-acetyl-D-muramate 6-phosphate + H2O = N-acetyl-D-glucosamine 6-phosphate + (R)-lactate. It participates in amino-sugar metabolism; N-acetylmuramate degradation. Its function is as follows. Specifically catalyzes the cleavage of the D-lactyl ether substituent of MurNAc 6-phosphate, producing GlcNAc 6-phosphate and D-lactate. The protein is N-acetylmuramic acid 6-phosphate etherase of Bacillus thuringiensis subsp. konkukian (strain 97-27).